Here is a 710-residue protein sequence, read N- to C-terminus: mRNA export factor crp79 (710 aa).

RRM domains follow at residues 19 to 102 and 222 to 292; these read IYVG…KLTI and HFKQ…PTTP. Residues 333 to 348 show a composition bias toward polar residues; that stretch reads QWGSVSTTGVSNQQNH. The interval 333–357 is disordered; that stretch reads QWGSVSTTGVSNQQNHPAAWNPDNK. The region spanning 401–474 is the RRM 3 domain; it reads EDLFSPFGSI…DRIRRLQAFF (74 aa). Positions 502–524 are enriched in polar residues; sequence TIRKPIESSTNKISENPTTLSSK. Positions 502 to 544 are disordered; sequence TIRKPIESSTNKISENPTTLSSKVENKNEPKTGENKEPSQTNE. Over residues 525-538 the composition is skewed to basic and acidic residues; the sequence is VENKNEPKTGENKE.

It is found in the cytoplasm. The protein localises to the nucleus. Binds the poly(A) tail of mRNA. Involved in the export of mRNA from the nucleus to the cytoplasm. This chain is mRNA export factor crp79 (crp79), found in Schizosaccharomyces pombe (strain 972 / ATCC 24843) (Fission yeast).